A 186-amino-acid polypeptide reads, in one-letter code: Large ribosomal subunit protein uL5 (186 aa).

The protein belongs to the universal ribosomal protein uL5 family. As to quaternary structure, part of the 50S ribosomal subunit; contacts the 5S rRNA and probably tRNA. Forms a bridge to the 30S subunit in the 70S ribosome.

In terms of biological role, this is one of the proteins that bind and probably mediate the attachment of the 5S RNA into the large ribosomal subunit, where it forms part of the central protuberance. In the 70S ribosome it contacts protein S13 of the 30S subunit (bridge B1b), connecting the 2 subunits; this bridge is implicated in subunit movement. May contact the P site tRNA; the 5S rRNA and some of its associated proteins might help stabilize positioning of ribosome-bound tRNAs. This Pyrococcus furiosus (strain ATCC 43587 / DSM 3638 / JCM 8422 / Vc1) protein is Large ribosomal subunit protein uL5.